The primary structure comprises 365 residues: Histidinol-phosphate aminotransferase (365 aa).

Residues 1–22 (MSRPVPNPGILDIAPYTPGKSP) are disordered. An N6-(pyridoxal phosphate)lysine modification is found at lysine 221.

Belongs to the class-II pyridoxal-phosphate-dependent aminotransferase family. Histidinol-phosphate aminotransferase subfamily. Homodimer. Pyridoxal 5'-phosphate serves as cofactor.

The catalysed reaction is L-histidinol phosphate + 2-oxoglutarate = 3-(imidazol-4-yl)-2-oxopropyl phosphate + L-glutamate. The protein operates within amino-acid biosynthesis; L-histidine biosynthesis; L-histidine from 5-phospho-alpha-D-ribose 1-diphosphate: step 7/9. This Rhodopseudomonas palustris (strain BisA53) protein is Histidinol-phosphate aminotransferase.